Reading from the N-terminus, the 290-residue chain is Ribosomal RNA small subunit methyltransferase A (290 aa).

S-adenosyl-L-methionine contacts are provided by histidine 37, valine 39, glycine 64, glutamate 85, aspartate 115, and asparagine 132.

The protein belongs to the class I-like SAM-binding methyltransferase superfamily. rRNA adenine N(6)-methyltransferase family. RsmA subfamily.

It localises to the cytoplasm. The catalysed reaction is adenosine(1518)/adenosine(1519) in 16S rRNA + 4 S-adenosyl-L-methionine = N(6)-dimethyladenosine(1518)/N(6)-dimethyladenosine(1519) in 16S rRNA + 4 S-adenosyl-L-homocysteine + 4 H(+). Specifically dimethylates two adjacent adenosines (A1518 and A1519) in the loop of a conserved hairpin near the 3'-end of 16S rRNA in the 30S particle. May play a critical role in biogenesis of 30S subunits. The protein is Ribosomal RNA small subunit methyltransferase A of Acidothermus cellulolyticus (strain ATCC 43068 / DSM 8971 / 11B).